The chain runs to 97 residues: Putative septation protein SpoVG (97 aa).

The protein belongs to the SpoVG family.

In terms of biological role, essential for sporulation. Interferes with or is a negative regulator of the pathway leading to asymmetric septation. This Bacillus cereus (strain 03BB102) protein is Putative septation protein SpoVG.